Consider the following 342-residue polypeptide: Nucleoid-associated protein Shewana3_2426 (342 aa).

The protein belongs to the YejK family.

It is found in the cytoplasm. It localises to the nucleoid. The sequence is that of Nucleoid-associated protein Shewana3_2426 from Shewanella sp. (strain ANA-3).